Here is a 4171-residue protein sequence, read N- to C-terminus: Cytoplasmic dynein 2 heavy chain 1 (4171 aa).

Residues 1-1598 (MSSDSKDQRK…VLRQVSSEFE (1598 aa)) are stem. Position 115–122 (115–122 (GKELTEGN)) interacts with ATP. Coiled coils occupy residues 164–203 (ANDY…CDEL), 629–693 (KQLE…KEEE), 829–861 (DLEE…AERL), 927–1048 (EIAE…KEKR), and 1354–1383 (SRQS…LEQK). AAA stretches follow at residues 1599–1823 (YTYE…VLGG), 1883–2100 (EPLG…VRSH), 2184–2432 (VTKE…WVVS), and 2527–2767 (RFAF…PIKY). Residues 1637 to 1644 (GPAGTGKT), 1921 to 1928 (GAAGSGKS), 2226 to 2233 (GTTGCGKQ), and 2565 to 2572 (GRPGFGRR) each bind ATP. The stalk stretch occupies residues 2776–3064 (QLLGYKRLTL…VDLDREQDTI (289 aa)). Coiled-coil stretches lie at residues 2790 to 2877 (ERLK…KEVQ), 2999 to 3059 (EKIA…DLDR), and 3308 to 3336 (ELEE…LLLQ). AAA stretches follow at residues 3140–3367 (ASLE…IITK) and 3575–3784 (LMDF…FVEQ).

This sequence belongs to the dynein heavy chain family. The cytoplasmic dynein complex 2 is probably composed by a heavy chain che-3 homodimer and a number of light intermediate chains.

The protein localises to the cell projection. The protein resides in the cilium membrane. It is found in the cytoplasm. It localises to the cytoskeleton. Functionally, functions as a motor for intraflagellar retrograde transport in chemosensory neurons. Functions in cilia biogenesis. This is Cytoplasmic dynein 2 heavy chain 1 from Caenorhabditis elegans.